The following is a 131-amino-acid chain: Protein anoxia up-regulated (131 aa).

The segment covering 1 to 24 has biased composition (polar residues); sequence MVYESGFTTRRTYSSRPVTTSYAV. A disordered region spans residues 1–121; it reads MVYESGFTTR…STTSGNLPGG (121 aa). Low complexity-rich tracts occupy residues 44–53 and 98–116; these read SSDYSYTSKS and TSTT…TTSG.

Concentrated in lamina neurons, first optic lobe neurons and cortical neurons of central brain.

Plays an important role in the regulation of tissue responsiveness to oxygen deprivation. The chain is Protein anoxia up-regulated from Drosophila melanogaster (Fruit fly).